A 176-amino-acid polypeptide reads, in one-letter code: Ribosome rescue factor SmrB (176 aa).

In terms of domain architecture, Smr spans 93-168; sequence LDLHGYRQSE…GDAALLVLID (76 aa).

The protein belongs to the SmrB family. In terms of assembly, associates with collided ribosomes, but not with correctly translating polysomes.

Functionally, acts as a ribosome collision sensor. Detects stalled/collided disomes (pairs of ribosomes where the leading ribosome is stalled and a second ribosome has collided with it) and endonucleolytically cleaves mRNA at the 5' boundary of the stalled ribosome. Stalled/collided disomes form a new interface (primarily via the 30S subunits) that binds SmrB. Cleaved mRNA becomes available for tmRNA ligation, leading to ribosomal subunit dissociation and rescue of stalled ribosomes. The sequence is that of Ribosome rescue factor SmrB from Shewanella sp. (strain MR-4).